The sequence spans 362 residues: Transcription factor Sox-7 (362 aa).

The tract at residues 19 to 41 (MDGDLSDGLSPHRSPREKGSETR) is disordered. Residues 32–41 (SPREKGSETR) are compositionally biased toward basic and acidic residues. The HMG box DNA-binding region spans 42–110 (IRRPMNAFMV…QHMQDYPNYK (69 aa)). Residues 246–362 (QPGSSMIPPV…ATYYNSYSVS (117 aa)) enclose the Sox C-terminal domain.

As to expression, localized to the vegetal hemisphere of blastula embryos. Tissue-specific expression in early neurula (stage 13-14) embryos begins in the ciliate cells of the epidermis. Starting about stage 24, expression is found in a lateral stripe on each side of the embryo, with expression extending more posteriorly as development proceeds. Expressed in embryonic vasculature, as well as in the procardia tube, endocardium, notochord and hindbrain. As development proceeds, strong expression is seen in the hindbrain, posterior cardinal veins, aortic arch, stomodeal depression, epithelium and intersomitic arteries of stage 33/34 larvae. Expressed in posterior rhombomeres. By stage 40 larvae, expression in most of the vascular endothelia disappears, in particular in the posterior cardinal vein, but expression continues in the hindbrain. Expressed in a wide range of adult tissues, including ovary, testis, kidney, bladder, duodenum and liver.

The protein resides in the nucleus. In terms of biological role, transcription factor. Binds to the DNA sequence 5'-AACAAT-3'. Acts downstream of vegt and upstream of nodal signaling to promote endodermal and mesodermal differentiation by promoting vegt-induced expression of both endodermal genes (including endodermin) and mesodermal genes (including snai1/snail and snai2/slug). Induces expression of multiple nodal genes (including nodal, nodal2, nodal4, nodal5 and nodal6) and binds directly to sites within the promoter of the nodal5 gene. The endodermal and mesodermal specification pathways then interact to initiate cardiogenesis. Acts partially redundantly with sox18 during cardiogenesis. Also acts as an antagonist of beta-catenin signaling. Regulates (possibly indirectly) development of the pronephros, the functional larval kidney. The protein is Transcription factor Sox-7 (sox7) of Xenopus laevis (African clawed frog).